A 395-amino-acid polypeptide reads, in one-letter code: MTVPATRKDLMIVNMGPHHPSMHGVLRLIVTLDGEDVIDCEPILGYLHRGMEKIAENRTIVQYLPYVTRWDYLATMFTEAITVNGPEQLGNIQVPKRASYIRAILLELSRIASHLLWLGPFMADIGAQTPFFYIFRERELIYDLFEAATGMRMMHNFFRIGGVAADLPHGWIDKCLDFCDYFLTGVAEYQKFITRNPIFLERVEGVGIIGGEEALNWGLSGPMLRASGIQWDLRKVDHYECYDEFDWEVQWQNEGDSLARYLVRIREMTESIKIIQQALEGIPGGPYENLEIRRFDIDRVKDPEWNDFEYRFISKKPSPTFELSKQELYVRVEAPKGELGIFLVGDRSVFPWRWKIRPPGFINLQILPQLVKRMKLADIMTILGSIDIIMGEVDR.

The protein belongs to the complex I 49 kDa subunit family. NDH is composed of at least 16 different subunits, 5 of which are encoded in the nucleus.

Its subcellular location is the plastid. It localises to the chloroplast thylakoid membrane. The catalysed reaction is a plastoquinone + NADH + (n+1) H(+)(in) = a plastoquinol + NAD(+) + n H(+)(out). It carries out the reaction a plastoquinone + NADPH + (n+1) H(+)(in) = a plastoquinol + NADP(+) + n H(+)(out). Functionally, NDH shuttles electrons from NAD(P)H:plastoquinone, via FMN and iron-sulfur (Fe-S) centers, to quinones in the photosynthetic chain and possibly in a chloroplast respiratory chain. The immediate electron acceptor for the enzyme in this species is believed to be plastoquinone. Couples the redox reaction to proton translocation, and thus conserves the redox energy in a proton gradient. The protein is NAD(P)H-quinone oxidoreductase subunit H, chloroplastic of Coffea arabica (Arabian coffee).